We begin with the raw amino-acid sequence, 392 residues long: Chorismate synthase (392 aa).

2 residues coordinate NADP(+): Arg-39 and Arg-45. FMN is bound by residues 128-130 (RSS), 248-249 (QA), Gly-300, 315-319 (KPIPT), and Arg-341.

It belongs to the chorismate synthase family. In terms of assembly, homotetramer. It depends on FMNH2 as a cofactor.

The catalysed reaction is 5-O-(1-carboxyvinyl)-3-phosphoshikimate = chorismate + phosphate. The protein operates within metabolic intermediate biosynthesis; chorismate biosynthesis; chorismate from D-erythrose 4-phosphate and phosphoenolpyruvate: step 7/7. Its function is as follows. Catalyzes the anti-1,4-elimination of the C-3 phosphate and the C-6 proR hydrogen from 5-enolpyruvylshikimate-3-phosphate (EPSP) to yield chorismate, which is the branch point compound that serves as the starting substrate for the three terminal pathways of aromatic amino acid biosynthesis. This reaction introduces a second double bond into the aromatic ring system. In Trichlorobacter lovleyi (strain ATCC BAA-1151 / DSM 17278 / SZ) (Geobacter lovleyi), this protein is Chorismate synthase.